Here is a 358-residue protein sequence, read N- to C-terminus: Acyl-CoA Delta-12 desaturase (358 aa).

2 consecutive transmembrane segments (helical) span residues 30–50 and 55–75; these read IILYIIMHLTGFYGLYLAMFY and TVFYSWFLLVIALQGVTAGSH. 5 residues coordinate Fe cation: His75, His80, His112, His115, and His116. The short motif at 75 to 80 is the Histidine box-1 element; it reads HRLWAH. Residues 112–116 carry the Histidine box-2 motif; sequence HRVHH. 2 consecutive transmembrane segments (helical) span residues 175–195 and 200–220; these read TFFAPVIGFYLPAAIPWYFWG and TAFFVATMLRYCACTNITFLV. Residues His225, His254, His257, and His258 each coordinate Fe cation. The Histidine box-3 signature appears at 254–258; it reads HNYHH.

This sequence belongs to the fatty acid desaturase type 1 family. Fe(2+) serves as cofactor.

It is found in the membrane. It catalyses the reaction (9Z)-octadecenoyl-CoA + 2 Fe(II)-[cytochrome b5] + O2 + 2 H(+) = (9Z,12Z)-octadecadienoyl-CoA + 2 Fe(III)-[cytochrome b5] + 2 H2O. The catalysed reaction is (9Z)-hexadecenoyl-CoA + 2 Fe(II)-[cytochrome b5] + O2 + 2 H(+) = (9Z,12Z)-hexadecadienoyl-CoA + 2 Fe(III)-[cytochrome b5] + 2 H2O. Its function is as follows. Catalyzes the formation of a Delta12 double bond, acting on monounsaturated fatty acyl substrates like palmitoleoyl-CoA ((9Z)-hexadecenoyl-CoA) and oleoyl-CoA ((9Z)-octadecenoyl-CoA) with higher desaturation activity on (9Z)-octadecenoyl-CoA than (9Z)-hexadecenoyl-CoA. Requires preexisting cis double bond at the Delta9 position of fatty acyls to be able to insert the Delta12 double bond. Delta12-desaturation of (9Z)-octadecenoyl-CoA in insects produces (9Z,12Z)-octadecadienoyl-CoA (linoleoyl-CoA) which may be used to supply precursors of crucial mediators of immunity and reproduction and other essential functions. This chain is Acyl-CoA Delta-12 desaturase, found in Tribolium castaneum (Red flour beetle).